Consider the following 374-residue polypeptide: MSVPAFIDVTEEDQAAELRAYLKSKGAEISEENSEGGLHIDLAQIIEACDVCLKDDDKDVESSMNSVVSLVLILETDKQEALIESLCEKLVKSREGERPSLRLQLLSNLFHGMDKSIPARYTVYCALIKVAATCGGIVYIPTDLDQVRKWISDWNLSTEKKHVVLRLLYEALVDCKKSDEAAKVMVELLGSYTDDNASQARLDAHKCIVRALKDPKAFLLDHLLALKPVKFLEGELIHDLLTIFVSAKLSSYVKFYQNNKDFIDSLGLSHEQNMEKMRLLTFMGMAVDNKEISFDTIQQELQMGADEVEAFIIDAVKTKMVYCKIDQTQKKVVVSHSTHRTFGKQQWQQLYDILNTWKLNLNKVKNSLYSISDA.

The 160-residue stretch at 180–339 folds into the PCI domain; it reads EAAKVMVELL…KKVVVSHSTH (160 aa).

It belongs to the eIF-3 subunit M family. As to quaternary structure, component of the eukaryotic translation initiation factor 3 (eIF-3) complex, which is composed of 13 subunits: eif3a, eif3b, eif3c, eif3d, eif3e, eif3f, eif3g, eif3h, eif3i, eif3j, eif3k, eif3l and eif3m.

It is found in the cytoplasm. Its function is as follows. Component of the eukaryotic translation initiation factor 3 (eIF-3) complex, which is involved in protein synthesis of a specialized repertoire of mRNAs and, together with other initiation factors, stimulates binding of mRNA and methionyl-tRNAi to the 40S ribosome. The eIF-3 complex specifically targets and initiates translation of a subset of mRNAs involved in cell proliferation. This is Eukaryotic translation initiation factor 3 subunit M (eif3m) from Xenopus laevis (African clawed frog).